The sequence spans 200 residues: Small ribosomal subunit protein eS1 (200 aa).

It belongs to the eukaryotic ribosomal protein eS1 family. Part of the 30S ribosomal subunit.

This is Small ribosomal subunit protein eS1 from Thermococcus kodakarensis (strain ATCC BAA-918 / JCM 12380 / KOD1) (Pyrococcus kodakaraensis (strain KOD1)).